The chain runs to 234 residues: Multicopy suppressor of SEC21 protein 27 (234 aa).

At 1–47 (MQTPLESTDVKLDTLNEPSAHLIEKNVALPKDIFRSYLSYWIYEIAR) the chain is on the cytoplasmic side. Thr3 carries the phosphothreonine modification. The helical transmembrane segment at 48 to 68 (YTPVMILSLVIGVLVLLIIFF) threads the bilayer. Topologically, residues 69–72 (NDNE) are extracellular. The chain crosses the membrane as a helical span at residues 73–93 (ACVFNSAYYAYLSLVVLLIIL). Over 94–234 (GDGNPKLVSR…NIDALLKKTE (141 aa)) the chain is Cytoplasmic. The COPI binding stretch occupies residues 231 to 234 (KKTE).

It belongs to the DUP/COS family. Interacts with MST28. Binds to coatomer proteins of COPI and SEC23/SEC24 of COPII coated vesicles.

It is found in the endoplasmic reticulum. The protein localises to the golgi apparatus. Its subcellular location is the cytoplasmic vesicle. It localises to the COPI-coated vesicle membrane. The protein resides in the COPII-coated vesicle membrane. In terms of biological role, involved in protein trafficking vesicle formation, probably by stabilizing of coatomer at the Golgi membrane and thus allowing the efficient formation of COPI coated vesicles. The sequence is that of Multicopy suppressor of SEC21 protein 27 (MST27) from Saccharomyces cerevisiae (strain ATCC 204508 / S288c) (Baker's yeast).